Here is a 175-residue protein sequence, read N- to C-terminus: Peptide deformylase (175 aa).

The Fe cation site is built by Cys-99 and His-141. Glu-142 is an active-site residue. His-145 provides a ligand contact to Fe cation.

This sequence belongs to the polypeptide deformylase family. Fe(2+) serves as cofactor.

It catalyses the reaction N-terminal N-formyl-L-methionyl-[peptide] + H2O = N-terminal L-methionyl-[peptide] + formate. In terms of biological role, removes the formyl group from the N-terminal Met of newly synthesized proteins. Requires at least a dipeptide for an efficient rate of reaction. N-terminal L-methionine is a prerequisite for activity but the enzyme has broad specificity at other positions. The protein is Peptide deformylase of Rickettsia prowazekii (strain Madrid E).